The chain runs to 639 residues: MSGRISDRDIAAIREGARIEDVVGDYVQLRRAGADSLKGLCPFHNEKSPSFHVRPNHGHFHCFGCGEGGDVYAFIQKIEHVSFVEAVELLADRIGHTISYTGAATSVQRDRGSRSRLLAANAAAAAFYAQALQSDEAAPARQYLTERSFDAAAARKFGCGFAPSGWDSLTKHLQRKGFEFEELEAAGLSRQGRHGPMDRFHRRLLWPIRTSAGEVVGFGARRLFDDDAMEAKYVNTPETLLYKKSSVMFGIDLAKRDIAKGHQAVVVEGYTDVMAMHLAGVTTAVASCGTAFGGEHLAMLRRLMMDDSFFRGELIYVFDGDEAGRAAALKAFDGEQKLAGQSFVAVAPDGMDPCDLRLKCGDAALRDLVARRTPLFEFAIRAAIAEMDLDSAEGRVAALRRCVPMVGQIKDPTLRDEYARQLAGWVGWADVAQVIGRVRGEAKRTKHPRLGRLGSTTIARAAQRPTAGPPTELAVRPDPRDPTLWPQREALKSALQYPALAGPVFDALTVEGFTHPEYAAVRAAIDTAGGTSAGLSGAQWLDMVRQQTTSTVTSALISELGVEAIQVDDDKLPRYIAGVLARLQEVWLGRQIAEVKSKLQRMSPIEQGDEYHALFGDLVAMEAYRRSLLEQASGDDLTA.

The CHC2-type zinc finger occupies 41–65; sequence CPFHNEKSPSFHVRPNHGHFHCFGC. The 87-residue stretch at 262 to 348 folds into the Toprim domain; sequence HQAVVVEGYT…AGQSFVAVAP (87 aa). The Mg(2+) site is built by Glu268, Asp319, and Asp321. A disordered region spans residues 460–479; the sequence is RAAQRPTAGPPTELAVRPDP.

It belongs to the DnaG primase family. In terms of assembly, monomer. Interacts with DnaB. Requires Zn(2+) as cofactor. Mg(2+) serves as cofactor.

It catalyses the reaction ssDNA + n NTP = ssDNA/pppN(pN)n-1 hybrid + (n-1) diphosphate.. In terms of biological role, RNA polymerase that catalyzes the synthesis of short RNA molecules used as primers for DNA polymerase during DNA replication. In Mycobacterium bovis (strain ATCC BAA-935 / AF2122/97), this protein is DNA primase.